The primary structure comprises 112 residues: UPF0342 protein SSA_1465 (112 aa).

It belongs to the UPF0342 family.

In Streptococcus sanguinis (strain SK36), this protein is UPF0342 protein SSA_1465.